The chain runs to 98 residues: UPF0358 protein LCA_1078 (98 aa).

This sequence belongs to the UPF0358 family.

This chain is UPF0358 protein LCA_1078, found in Latilactobacillus sakei subsp. sakei (strain 23K) (Lactobacillus sakei subsp. sakei).